A 739-amino-acid polypeptide reads, in one-letter code: Oxysterol-binding protein-related protein 9 (739 aa).

The PH domain maps to 2-99 (ASIMEGPLSK…WIHALEETIL (98 aa)). 2 disordered regions span residues 220–292 (TQAS…SYSS) and 306–371 (SSTS…ESVE). Polar residues predominate over residues 249-259 (NLGSRQSPTPI). Positions 260–276 (STGSGQSAPSSSLTSPS) are enriched in low complexity. Polar residues-rich tracts occupy residues 277 to 292 (HVNL…SYSS), 306 to 330 (SSTS…STGA), and 338 to 352 (TESL…TNEA).

It belongs to the OSBP family.

It catalyses the reaction a 1,2-diacyl-sn-glycero-3-phospho-(1D-myo-inositol 4-phosphate)(out) + a 1,2-diacyl-sn-glycero-3-phospho-L-serine(in) = a 1,2-diacyl-sn-glycero-3-phospho-(1D-myo-inositol 4-phosphate)(in) + a 1,2-diacyl-sn-glycero-3-phospho-L-serine(out). Functionally, interacts with OSBPL11 to function as lipid transfer proteins. Together they form a heterodimer that localizes at the ER-trans-Golgi membrane contact sites, and exchanges phosphatidylserine (1,2-diacyl-sn-glycero-3-phospho-L-serine, PS) for phosphatidylinositol-4-phosphate (1,2-diacyl-sn-glycero-3-phospho-(1D-myo-inositol 4-phosphate), PI(4)P) between the two organelles, a step that is critical for sphingomyelin synthesis in the Golgi complex. This chain is Oxysterol-binding protein-related protein 9 (osbpl9), found in Xenopus tropicalis (Western clawed frog).